We begin with the raw amino-acid sequence, 123 residues long: Putative C-type lectin protein FPV003/FPV258 (123 aa).

One can recognise a C-type lectin domain in the interval 21-122 (CRGPYTSYNN…CNATYGFVCI (102 aa)).

The protein is Putative C-type lectin protein FPV003/FPV258 of Fowlpox virus (strain NVSL) (FPV).